Consider the following 287-residue polypeptide: Pantothenate synthetase (287 aa).

30–37 (MGNLHSGH) serves as a coordination point for ATP. H37 functions as the Proton donor in the catalytic mechanism. Position 61 (Q61) interacts with (R)-pantoate. A beta-alanine-binding site is contributed by Q61. ATP is bound at residue 149-152 (GEKD). Residue Q155 participates in (R)-pantoate binding. Residues V178 and 186 to 189 (LSSR) contribute to the ATP site.

This sequence belongs to the pantothenate synthetase family. As to quaternary structure, homodimer.

It localises to the cytoplasm. The enzyme catalyses (R)-pantoate + beta-alanine + ATP = (R)-pantothenate + AMP + diphosphate + H(+). It participates in cofactor biosynthesis; (R)-pantothenate biosynthesis; (R)-pantothenate from (R)-pantoate and beta-alanine: step 1/1. Catalyzes the condensation of pantoate with beta-alanine in an ATP-dependent reaction via a pantoyl-adenylate intermediate. This chain is Pantothenate synthetase, found in Pseudomonas putida (strain W619).